The following is a 359-amino-acid chain: Type-1 angiotensin II receptor (359 aa).

Residues 1-25 (MILNSSTEDGIKRIQDDCPKAGRHN) are Extracellular-facing. N-linked (GlcNAc...) asparagine glycosylation is present at Asn-4. 2 residues coordinate angiotensin II: Gln-15 and Asp-17. 2 cysteine pairs are disulfide-bonded: Cys-18–Cys-274 and Cys-101–Cys-180. Residues 26–55 (YIFVMIPTLYSIIFVVGIFGNSLVVIVIYF) form a helical membrane-spanning segment. Topologically, residues 56–61 (YMKLKT) are cytoplasmic. Residues 62-89 (VASVFLLNLALADLCFLLTLPLWAVYTA) traverse the membrane as a helical segment. Residues 90–98 (MEYRWPFGN) lie on the Extracellular side of the membrane. Residues 99 to 125 (YLCKIASASVSFNLYASVFLLTCLSID) traverse the membrane as a helical segment. At 126–141 (RYLAIVHPMKSRLRRT) the chain is on the cytoplasmic side. The helical transmembrane segment at 142-165 (MLVAKVTCIIIWLLAGLASLPAII) threads the bilayer. The Extracellular portion of the chain corresponds to 166–190 (HRNVFFIENTNITVCAFHYESQNST). Arg-167 contacts angiotensin II. Residue Asn-176 is glycosylated (N-linked (GlcNAc...) asparagine). Positions 182, 183, and 184 each coordinate angiotensin II. Asn-188 is a glycosylation site (N-linked (GlcNAc...) asparagine). The chain crosses the membrane as a helical span at residues 191-216 (LPIGLGLTKNILGFLFPFLIILTSYT). Residue Lys-199 participates in angiotensin II binding. Residues 217–239 (LIWKALKKAYEIQKNKPRNDDIF) lie on the Cytoplasmic side of the membrane. A helical membrane pass occupies residues 240–268 (KIIMAIVLFFFFSWIPHQIFTFLDVLIQL). Over 269-278 (GIIRDCRIAD) the chain is Extracellular. A helical transmembrane segment spans residues 279–304 (IVDTAMPITICIAYFNNCLNPLFYGF). Residues 305–359 (LGKKFKKYFLQLLKYIPPKAKSHSNLSTKMSTLSYRPSDNVSSSTKKPAPCFEVE) lie on the Cytoplasmic side of the membrane. Polar residues predominate over residues 335-350 (STLSYRPSDNVSSSTK). The interval 335–359 (STLSYRPSDNVSSSTKKPAPCFEVE) is disordered. Cys-355 carries S-palmitoyl cysteine lipidation.

Belongs to the G-protein coupled receptor 1 family. As to quaternary structure, interacts with MAS1. Interacts with ARRB1. Interacts with FLNA (via filamin repeat 21); increases PKA-mediated phosphorylation of FLNA. In terms of processing, C-terminal Ser or Thr residues may be phosphorylated.

The protein resides in the cell membrane. Its function is as follows. Receptor for angiotensin II, a vasoconstricting peptide, which acts as a key regulator of blood pressure and sodium retention by the kidney. The activated receptor in turn couples to G-alpha proteins G(q) (GNAQ, GNA11, GNA14 or GNA15) and thus activates phospholipase C and increases the cytosolic Ca(2+) concentrations, which in turn triggers cellular responses such as stimulation of protein kinase C. The sequence is that of Type-1 angiotensin II receptor (AGTR1) from Pan troglodytes (Chimpanzee).